Consider the following 88-residue polypeptide: U24 protein (88 aa).

A Phosphothreonine modification is found at Thr-6. Residues 8 to 11 (PPSY) carry the PPXY motif motif. The chain crosses the membrane as a helical span at residues 58 to 78 (FAFLVLTGLAIAMILFIAFVI).

Interacts with host ITCH; this interaction probably mediates ITCH degradation. Interacts probably with NEDD4.

Its subcellular location is the membrane. Its function is as follows. Down-regulates the TCR/CD3E complex and the transferrin receptor TFRC in host T-cells by blocking them from recycling back to the cell surface. The chain is U24 protein (U24) from Human herpesvirus 6B (strain Z29) (HHV-6 variant B).